The sequence spans 1010 residues: Phosphoenolpyruvate carboxylase (1010 aa).

The span at 1-18 shows a compositional bias: polar residues; sequence MIMRSPETSGASMPQSTA. Disordered stretches follow at residues 1–36 and 132–154; these read MIMR…PGAG and LRPS…PPLA. Active-site residues include His-195 and Lys-652. The tract at residues 967-986 is disordered; that stretch reads QNRQPPMSESPGTPEDRRTY.

This sequence belongs to the PEPCase type 1 family. The cofactor is Mg(2+).

It catalyses the reaction oxaloacetate + phosphate = phosphoenolpyruvate + hydrogencarbonate. Functionally, forms oxaloacetate, a four-carbon dicarboxylic acid source for the tricarboxylic acid cycle. The polypeptide is Phosphoenolpyruvate carboxylase (Parasynechococcus marenigrum (strain WH8102)).